We begin with the raw amino-acid sequence, 244 residues long: Electron transfer flavoprotein beta subunit lysine methyltransferase homolog (244 aa).

This sequence belongs to the methyltransferase superfamily. ETFBKMT family.

Its function is as follows. Probable methyltransferase. This is Electron transfer flavoprotein beta subunit lysine methyltransferase homolog from Caenorhabditis elegans.